The primary structure comprises 541 residues: Chaperonin GroEL (541 aa).

ATP-binding positions include Thr-29–Pro-32, Asp-86–Thr-90, Gly-413, Asn-478–Leu-480, and Asp-494.

It belongs to the chaperonin (HSP60) family. In terms of assembly, forms a cylinder of 14 subunits composed of two heptameric rings stacked back-to-back. Interacts with the co-chaperonin GroES.

It localises to the cytoplasm. The enzyme catalyses ATP + H2O + a folded polypeptide = ADP + phosphate + an unfolded polypeptide.. Functionally, together with its co-chaperonin GroES, plays an essential role in assisting protein folding. The GroEL-GroES system forms a nano-cage that allows encapsulation of the non-native substrate proteins and provides a physical environment optimized to promote and accelerate protein folding. This is Chaperonin GroEL from Lachnoclostridium phytofermentans (strain ATCC 700394 / DSM 18823 / ISDg) (Clostridium phytofermentans).